Here is a 661-residue protein sequence, read N- to C-terminus: Putative DUF21 domain-containing protein At3g13070, chloroplastic (661 aa).

The N-terminal 71 residues, 1–71 (MMGMALELSV…RSCEFSYRSR (71 aa)), are a transit peptide targeting the chloroplast. A run of 5 helical transmembrane segments spans residues 105 to 125 (GIVI…KVLA), 162 to 182 (GLIL…ETSI), 213 to 233 (FLTT…ALVT), 239 to 259 (IFGE…ILLL), and 285 to 305 (WLSL…MGIL). Residues 154–340 (VLTVLREQGL…ELSGAIEEEE (187 aa)) form the CNNM transmembrane domain. 2 consecutive CBS domains span residues 359 to 420 (MTPL…LLES) and 426 to 484 (MAHK…IFDE). Disordered regions lie at residues 559–578 (ESWE…QEPK) and 628–661 (SSEE…KKQQ). 2 stretches are compositionally biased toward acidic residues: residues 560–570 (SWEEDGEEEEG) and 630–643 (EEDD…EDQS). The span at 648–661 (LDEHVLADNSKKQQ) shows a compositional bias: basic and acidic residues.

It localises to the plastid. Its subcellular location is the chloroplast membrane. The sequence is that of Putative DUF21 domain-containing protein At3g13070, chloroplastic (CBSDUFCH1) from Arabidopsis thaliana (Mouse-ear cress).